Consider the following 147-residue polypeptide: Hemoglobin subunit gamma (147 aa).

The region spanning 3–147 is the Globin domain; that stretch reads HFTAEEKAII…VATALAHKYH (145 aa). The heme b site is built by histidine 64 and histidine 93.

The protein belongs to the globin family. As to quaternary structure, heterotetramer of two alpha chains and two gamma chains in fetal hemoglobin (Hb F). Red blood cells.

Its function is as follows. Gamma chains make up the fetal hemoglobin F, in combination with alpha chains. The protein is Hemoglobin subunit gamma (HBG) of Otolemur crassicaudatus (Brown greater galago).